The following is a 582-amino-acid chain: Hemagglutinin-neuraminidase (582 aa).

The Intravirion portion of the chain corresponds to 1-34 (MEPSKLFTISDNATFAPGPVNNAADKKTFRTCFR). Residues 35–55 (ILVLSVQAVTLILVIVTLGEL) traverse the membrane as a helical; Signal-anchor for type II membrane protein segment. Residues 56–582 (VRMINDQGLS…LPVLTRLTIT (527 aa)) are Virion surface-facing. Asparagine 127 is a glycosylation site (N-linked (GlcNAc...) asparagine; by host). 3 disulfide bridges follow: cysteine 178/cysteine 202, cysteine 192/cysteine 253, and cysteine 244/cysteine 257. The interval 240 to 245 (NRKSCS) is involved in neuraminidase activity. Asparagine 284 and asparagine 329 each carry an N-linked (GlcNAc...) asparagine; by host glycan. 3 disulfides stabilise this stretch: cysteine 350/cysteine 471, cysteine 382/cysteine 392, and cysteine 465/cysteine 475. N-linked (GlcNAc...) asparagine; by host glycosylation is found at asparagine 400 and asparagine 448. Asparagine 507 carries an N-linked (GlcNAc...) asparagine; by host glycan. A disulfide bridge connects residues cysteine 545 and cysteine 556.

This sequence belongs to the paramyxoviruses hemagglutinin-neuraminidase family. As to quaternary structure, homotetramer; composed of disulfide-linked homodimers. Interacts with F protein trimer.

The protein resides in the virion membrane. The protein localises to the host cell membrane. The catalysed reaction is Hydrolysis of alpha-(2-&gt;3)-, alpha-(2-&gt;6)-, alpha-(2-&gt;8)- glycosidic linkages of terminal sialic acid residues in oligosaccharides, glycoproteins, glycolipids, colominic acid and synthetic substrates.. Its function is as follows. Attaches the virus to alpha-2,3-linked sialic acid-containing cell receptors and thereby initiating infection. Binding of HN protein to the receptor induces a conformational change that allows the F protein to trigger virion/cell membranes fusion. Binds to the glycan motifs sialyl Lewis (SLe) and GM2 ganglioside (GM2-glycan). Neuraminidase activity ensures the efficient spread of the virus by dissociating the mature virions from the neuraminic acid containing glycoproteins. This chain is Hemagglutinin-neuraminidase (HN), found in Mumps virus (strain RW) (MuV).